The chain runs to 108 residues: UPF0060 membrane protein CC_1976 (108 aa).

The next 4 membrane-spanning stretches (helical) occupy residues Phe4–Trp24, Leu27–Leu47, Ala59–Glu79, and Arg85–Pro105.

It belongs to the UPF0060 family.

The protein localises to the cell inner membrane. This is UPF0060 membrane protein CC_1976 from Caulobacter vibrioides (strain ATCC 19089 / CIP 103742 / CB 15) (Caulobacter crescentus).